We begin with the raw amino-acid sequence, 373 residues long: MLKQVTPLVLIAAVTACSSPVERRQANGGDEYTNVKVQPALTIPEGLNAPTYSKEFDIPKLNSKADDKLVGKLLDIRPPLQVLPMAEGTHVEESGDSIKIVVESIDKDVDLKQELYTVLNNYLASQSINVLSEDYDKGLIETDWIENEEVIDSSFWGSDEIYQLRQRYQFEVDVRPHGRSGNIAINLIDHEESFDGKQQNILLSGEDKRRYTIDMLNNAVAYMSVKRSQAIKAKRLRESLGIDVNVVKGAPATVEGEAAEQSYWLADAPFERTWDRLRIVLPEMGFEIVDMDSNKGLYYINVNDDSGFWSSLWSEKKLPVEEGSYRMLLKEGDSEDKTRIYLHNSEDKPLDNVVVEAVYEGFSELMQEDRKIR.

The first 16 residues, 1 to 16, serve as a signal peptide directing secretion; that stretch reads MLKQVTPLVLIAAVTA. Residue Cys-17 is the site of N-palmitoyl cysteine attachment. Cys-17 carries S-diacylglycerol cysteine lipidation.

Belongs to the BamC family. In terms of assembly, part of the Bam complex.

It localises to the cell outer membrane. Its function is as follows. Part of the outer membrane protein assembly complex, which is involved in assembly and insertion of beta-barrel proteins into the outer membrane. The chain is Outer membrane protein assembly factor BamC from Shewanella sediminis (strain HAW-EB3).